A 295-amino-acid chain; its full sequence is Glutamyl-Q tRNA(Asp) synthetase (295 aa).

L-glutamate is bound by residues 5-9 (RFAPS) and glutamate 41. A 'HIGH' region motif is present at residues 8–18 (PSPTGLLHIGS). Cysteine 97, cysteine 99, tyrosine 117, and cysteine 121 together coordinate Zn(2+). Tyrosine 178 and arginine 196 together coordinate L-glutamate. The 'KMSKS' region motif lies at 234 to 238 (KWSKQ). Lysine 237 contributes to the ATP binding site.

It belongs to the class-I aminoacyl-tRNA synthetase family. GluQ subfamily. Zn(2+) serves as cofactor.

Catalyzes the tRNA-independent activation of glutamate in presence of ATP and the subsequent transfer of glutamate onto a tRNA(Asp). Glutamate is transferred on the 2-amino-5-(4,5-dihydroxy-2-cyclopenten-1-yl) moiety of the queuosine in the wobble position of the QUC anticodon. The protein is Glutamyl-Q tRNA(Asp) synthetase of Neisseria meningitidis serogroup A / serotype 4A (strain DSM 15465 / Z2491).